The primary structure comprises 133 residues: ATP synthase epsilon chain, sodium ion specific (133 aa).

It belongs to the ATPase epsilon chain family. In terms of assembly, F-type ATPases have 2 components, CF(1) - the catalytic core - and CF(0) - the membrane proton channel. CF(1) has five subunits: alpha(3), beta(3), gamma(1), delta(1), epsilon(1). CF(0) has three main subunits: a, b and c.

The protein resides in the cell membrane. Its activity is regulated as follows. Inhibited by nitrate. Functionally, produces ATP from ADP in the presence of a sodium gradient across the membrane. The polypeptide is ATP synthase epsilon chain, sodium ion specific (atpC) (Acetobacterium woodii (strain ATCC 29683 / DSM 1030 / JCM 2381 / KCTC 1655 / WB1)).